Here is a 923-residue protein sequence, read N- to C-terminus: MFWKFDLNTTSHVDKLLDKEHVTLQELMDEDDILQECKAQNQKLLDFLCRQQCMEELVNLITQDPPQDMEEKVRFKYPNTACELLTCDVPQISDRLGEDESLLNLLYDFLDQEPPLNPLLASFFSKTIGNLIARKTEQVIMFLKKKEKFISQLLKHIGTSALMDLLLRLVSCVEPVGLRQEVLHWLNEEKIIQRLVALIHPHQDEDRQSNASQALCDIIRLGRDQGSQLQETVEPDPLLITLESQDCVEQLLKNMFDGDQTESCLVSGMQVLLALLEPRRVGTEGLVDSFSQGLERSHSVSSSILRGIEPWLKNFHQLLLNPPKKKAILTTIGVLEEPLGNARLHGARLMAALLHTNTPGINQELCRLNTMDLLLDLFFKYTWNNFLHLQVELCIAAILSHAAREEQAEASGSDGKVEPLQGSGDGNGKLETTPSITSPPENTMVTHLFQKCCLVQRILEAWEANDHTQAAGGMRRGNMGHLTRIANAVVQNLEQGPVQAHISEVIRGLPADCRGRWESFVEETLMETNRRNTVDLAFSEYQIQQMTANFVDQFGFNDEEFADQDDNINAPFDRIAEINFNIEADEDSPSAALFEACCSDRIQPFDDDEEEDIWEDDETRCAARVMARARFGAPHVSDNYSKNALEHGGQDRKTGSAVARNVPGLAAPSSPTQKEGPRSESDSAGTTWTAVFDEPVNPLSATPGAARDVGSSAWAAGPSVVEEKGWAKFTDFQPFCCSETGPRCSSPVDMDHSNAEGGQSPGPEKTFGPTSPCAWNVCVTRKAPLVASDSSSSGGSDSEDDEKAAGAVEAVCTGHTGKVSPPPRTAEAAVGRAECPDSTVLAPACPAPSEVTISPAVATIAPSKAGSPTATIVVSSSVAAAVPPGPIVAVTTAAPAIVATLGTMTKDRKADALPEGAALNGPV.

Ser-289 carries the phosphoserine modification. 3 disordered regions span residues 409–441 (EASG…SPPE), 662–685 (VPGL…DSAG), and 743–766 (RCSS…PEKT). The segment covering 430–441 (LETTPSITSPPE) has biased composition (polar residues). Phosphoserine is present on residues Ser-746 and Ser-796.

It belongs to the SAPS family. In terms of assembly, protein phosphatase 6 (PP6) holoenzyme is proposed to be a heterotrimeric complex formed by the catalytic subunit, a SAPS domain-containing subunit (PP6R) and an ankyrin repeat-domain containing regulatory subunit (ARS). Interacts with PPP6C and NFKBIE. Interacts with ANKRD28. As to expression, strongest expression in bladder and lower levels found in heart and pancreas. Very weak expression observed in all other tissues tested.

The protein resides in the cytoplasm. Regulatory subunit of protein phosphatase 6 (PP6). May function as a scaffolding PP6 subunit. Involved in the PP6-mediated dephosphorylation of NFKBIE opposing its degradation in response to TNF-alpha. The protein is Serine/threonine-protein phosphatase 6 regulatory subunit 2 (Ppp6r2) of Mus musculus (Mouse).